The primary structure comprises 85 residues: Coiled-coil-helix-coiled-coil-helix domain-containing protein 7 (85 aa).

In terms of domain architecture, CHCH spans 13–55 (INPCLSESDASTRCMDENNYDRERCSSYFLKYKNCRRFWNSVM). 2 short sequence motifs (cx9C motif) span residues 16-26 (CLSESDASTRC) and 37-47 (CSSYFLKYKNC). Disulfide bonds link Cys16–Cys47 and Cys26–Cys37.

It belongs to the CHCHD7 family. In terms of assembly, monomer.

It is found in the mitochondrion intermembrane space. In Mus musculus (Mouse), this protein is Coiled-coil-helix-coiled-coil-helix domain-containing protein 7 (Chchd7).